Reading from the N-terminus, the 785-residue chain is MSYNSSNSGSGRYDDNRSGNSSYSSTSRGGSSYGNRSGSDRDYNRDGGSYNRDSSRDYNSSSGSGSGNGSSSYNKYPSSSSSSSSSSSTSSYGPSKGKDFQDSWGSSSTGTTNGYNGSSNGYNSSSNGYNSSNSSSSYGASNNGYNNSSGSSSSGSSGSSNGGSYNNSGSSNSNGYSKPTSNYSYSNGYTGPTTNYSSYSNGYSTPPTSTSTSSSSTTTTTTTTPSTSYNGGSTSYGYSTSGSSNGYGGYSQPPIPSYDPSSVSSYGAVTPASSSYNASVPGSSYGNSTYRSSGYGNQSYATTNSYGSSSYGSSGFYGNAKANTGSFGSALSPISWDLSKLPRFEKNFYLEHPDVSKFTQEEIEKFRASFQMTVKGREVPPPIMQFTQAPFPGYLMKEIIGAGFPNPTPIQSQAWPIALKGRDIIGLAKTGSGKTLAFLLPSIVHINAQPVLREDDGPIVLVLAPTRELALQIQEETNKFGGTSQISNTCVYGGASKHTQVAALKKGVEIVIATPGRLIDILESGKTNLRRVTYLVLDEADRMLDMGFEPQIRKIISQIRPDRQTLMFSATWPKEVQALAHDFLTDHIQVHIGSTEITANHNVRQIVEVCQDFEKKERMLSFLGSVGRDEKVIVFAETRKGVDDLQRVLQFSGFKSIGIHGNKSQPERDFVLSQFKNGMVPIMIATDVASRGLDIKDIKYVVNYDFPNTIEVYIHRIGRTARAGASGVSYSLLTTDNARLANELIKVLTEAKQKIPIELSNLSVTPSTSSNTKKFSPYPTYSKRY.

Low complexity-rich tracts occupy residues 1 to 11 (MSYNSSNSGSG), 18 to 37 (SGNS…GNRS), 49 to 95 (SYNR…YGPS), and 105 to 177 (GSSS…NGYS). The interval 1–233 (MSYNSSNSGS…TPSTSYNGGS (233 aa)) is disordered. Polar residues predominate over residues 178–191 (KPTSNYSYSNGYTG). A compositionally biased stretch (low complexity) spans 192–233 (PTTNYSSYSNGYSTPPTSTSTSSSSTTTTTTTTPSTSYNGGS). Residues 384-412 (MQFTQAPFPGYLMKEIIGAGFPNPTPIQS) carry the Q motif motif. The region spanning 415–590 (WPIALKGRDI…HDFLTDHIQV (176 aa)) is the Helicase ATP-binding domain. Residue 428 to 435 (AKTGSGKT) participates in ATP binding. A DEAD box motif is present at residues 538–541 (DEAD). A Helicase C-terminal domain is found at 602-763 (NVRQIVEVCQ…KIPIELSNLS (162 aa)). Polar residues predominate over residues 764 to 774 (VTPSTSSNTKK). The tract at residues 764–785 (VTPSTSSNTKKFSPYPTYSKRY) is disordered.

It belongs to the DEAD box helicase family. DDX5/DBP2 subfamily.

It localises to the cytoplasm. Its subcellular location is the nucleus. The enzyme catalyses ATP + H2O = ADP + phosphate + H(+). Its function is as follows. Probable ATP-dependent RNA helicase which may be involved nonsense-mediated mRNA decay and ribosome biogenesis through rRNA processing. This chain is Probable ATP-dependent RNA helicase ddx17 (ddx17), found in Dictyostelium discoideum (Social amoeba).